Consider the following 98-residue polypeptide: Parvalbumin beta 1 (98 aa).

The residue at position 1 (S1) is an N-acetylserine. EF-hand domains are found at residues 32–67 and 67–98; these read KIGL…FSAG and GARA…MIKG. D45, D47, S49, F51, E53, E56, D80, D82, D84, K86, and E91 together coordinate Ca(2+).

The protein belongs to the parvalbumin family.

Its function is as follows. In muscle, parvalbumin is thought to be involved in relaxation after contraction. It binds two calcium ions. This Macruronus magellanicus (Patagonian grenadier) protein is Parvalbumin beta 1.